The primary structure comprises 406 residues: Tyrosine--tRNA ligase (406 aa).

Position 35 (Y35) interacts with L-tyrosine. Positions 40–49 (ATSTSLHIGH) match the 'HIGH' region motif. 2 residues coordinate L-tyrosine: Y166 and Q170. Positions 226–230 (KMGKS) match the 'KMSKS' region motif. K229 provides a ligand contact to ATP. Positions 341-405 (ILLIDLMVLS…IGKKRILRVI (65 aa)) constitute an S4 RNA-binding domain.

It belongs to the class-I aminoacyl-tRNA synthetase family. TyrS type 1 subfamily. Homodimer.

Its subcellular location is the cytoplasm. The catalysed reaction is tRNA(Tyr) + L-tyrosine + ATP = L-tyrosyl-tRNA(Tyr) + AMP + diphosphate + H(+). Functionally, catalyzes the attachment of tyrosine to tRNA(Tyr) in a two-step reaction: tyrosine is first activated by ATP to form Tyr-AMP and then transferred to the acceptor end of tRNA(Tyr). The sequence is that of Tyrosine--tRNA ligase from Borrelia turicatae (strain 91E135).